Reading from the N-terminus, the 838-residue chain is Periplasmic nitrate reductase (838 aa).

Positions 1 to 29 (MKVSRRAFIKQTAAAATASVAGVTLPAGA) form a signal peptide, tat-type signal. Residues 41-97 (LKWSKAPCRFCGTGCGVEVAVKDNRVVATQGDPKAEVNRGLNCVKGYFLSKIMYGKD) form the 4Fe-4S Mo/W bis-MGD-type domain. Positions 48, 51, 55, and 83 each coordinate [4Fe-4S] cluster. Mo-bis(molybdopterin guanine dinucleotide)-binding positions include lysine 85, glutamine 152, asparagine 177, cysteine 181, 214–221 (WGSNMAEM), 245–249 (STFTH), methionine 382, glutamine 386, asparagine 492, 518–519 (SD), lysine 541, aspartate 568, and 728–737 (TGRVLEHWHS). Residue tryptophan 804 participates in substrate binding. Positions 812 and 829 each coordinate Mo-bis(molybdopterin guanine dinucleotide).

It belongs to the prokaryotic molybdopterin-containing oxidoreductase family. NasA/NapA/NarB subfamily. Component of the periplasmic nitrate reductase NapAB complex composed of NapA and NapB. The cofactor is [4Fe-4S] cluster. Mo-bis(molybdopterin guanine dinucleotide) is required as a cofactor. In terms of processing, predicted to be exported by the Tat system. The position of the signal peptide cleavage has not been experimentally proven.

It is found in the periplasm. It catalyses the reaction 2 Fe(II)-[cytochrome] + nitrate + 2 H(+) = 2 Fe(III)-[cytochrome] + nitrite + H2O. Catalytic subunit of the periplasmic nitrate reductase complex NapAB. Receives electrons from NapB and catalyzes the reduction of nitrate to nitrite. In Ralstonia pickettii (strain 12J), this protein is Periplasmic nitrate reductase.